Reading from the N-terminus, the 396-residue chain is Elongation factor Tu (396 aa).

Residues Lys10–Glu206 enclose the tr-type G domain. Residues Gly19–Thr26 are G1. Residue Gly19–Thr26 coordinates GTP. Thr26 lines the Mg(2+) pocket. The segment at Gly60–Ala64 is G2. The segment at Asp81–Gly84 is G3. GTP contacts are provided by residues Asp81–His85 and Asn136–Asp139. Positions Asn136 to Asp139 are G4. Positions Ser174–Leu176 are G5.

It belongs to the TRAFAC class translation factor GTPase superfamily. Classic translation factor GTPase family. EF-Tu/EF-1A subfamily. In terms of assembly, monomer.

The protein localises to the cytoplasm. The catalysed reaction is GTP + H2O = GDP + phosphate + H(+). GTP hydrolase that promotes the GTP-dependent binding of aminoacyl-tRNA to the A-site of ribosomes during protein biosynthesis. The polypeptide is Elongation factor Tu (Alcanivorax borkumensis (strain ATCC 700651 / DSM 11573 / NCIMB 13689 / SK2)).